The primary structure comprises 108 residues: MSEVFEITVQPGGERFVCQPQQSALHAMETQGKRCLPVGCRGGGCGLCKVRVLAGDYESGRVSCKHLPVEAREQGYALACRLFARSDLCIERYSKPCSESTVDQQQRE.

The 92-residue stretch at 5-96 folds into the 2Fe-2S ferredoxin-type domain; sequence FEITVQPGGE…DLCIERYSKP (92 aa). [2Fe-2S] cluster-binding residues include Cys-40, Cys-45, Cys-48, and Cys-80.

Belongs to the 2Fe2S plant-type ferredoxin family.

The protein operates within aromatic compound metabolism; catechol degradation. Its function is as follows. Ferredoxins are iron-sulfur proteins that transfer electrons in a wide variety of metabolic reactions. This is Ferredoxin, plant-type (nahT) from Pseudomonas putida (Arthrobacter siderocapsulatus).